Reading from the N-terminus, the 345-residue chain is 4-hydroxy-2-oxovalerate aldolase (345 aa).

The 253-residue stretch at 8–260 (ITVHDMTLRD…ETGVDVFKIQ (253 aa)) folds into the Pyruvate carboxyltransferase domain. 16 to 17 (RD) contributes to the substrate binding site. Asp-17 contributes to the Mn(2+) binding site. The active-site Proton acceptor is the His-20. Residues Ser-170 and His-199 each contribute to the substrate site. Residues His-199 and His-201 each coordinate Mn(2+). Position 290 (Tyr-290) interacts with substrate.

The protein belongs to the 4-hydroxy-2-oxovalerate aldolase family.

The catalysed reaction is (S)-4-hydroxy-2-oxopentanoate = acetaldehyde + pyruvate. The sequence is that of 4-hydroxy-2-oxovalerate aldolase from Leptothrix cholodnii (strain ATCC 51168 / LMG 8142 / SP-6) (Leptothrix discophora (strain SP-6)).